The following is a 370-amino-acid chain: Dual-specificity RNA methyltransferase RlmN (370 aa).

The active-site Proton acceptor is Glu93. The 239-residue stretch at 99-337 folds into the Radical SAM core domain; that stretch reads AEGRGTLCVS…VTTVRKTRGD (239 aa). An intrachain disulfide couples Cys106 to Cys343. Residues Cys113, Cys117, and Cys120 each contribute to the [4Fe-4S] cluster site. S-adenosyl-L-methionine is bound by residues 167-168, Ser199, 221-223, and Asn300; these read GE and SLH. Cys343 (S-methylcysteine intermediate) is an active-site residue.

The protein belongs to the radical SAM superfamily. RlmN family. [4Fe-4S] cluster is required as a cofactor.

It is found in the cytoplasm. It carries out the reaction adenosine(2503) in 23S rRNA + 2 reduced [2Fe-2S]-[ferredoxin] + 2 S-adenosyl-L-methionine = 2-methyladenosine(2503) in 23S rRNA + 5'-deoxyadenosine + L-methionine + 2 oxidized [2Fe-2S]-[ferredoxin] + S-adenosyl-L-homocysteine. The enzyme catalyses adenosine(37) in tRNA + 2 reduced [2Fe-2S]-[ferredoxin] + 2 S-adenosyl-L-methionine = 2-methyladenosine(37) in tRNA + 5'-deoxyadenosine + L-methionine + 2 oxidized [2Fe-2S]-[ferredoxin] + S-adenosyl-L-homocysteine. In terms of biological role, specifically methylates position 2 of adenine 2503 in 23S rRNA and position 2 of adenine 37 in tRNAs. m2A2503 modification seems to play a crucial role in the proofreading step occurring at the peptidyl transferase center and thus would serve to optimize ribosomal fidelity. The protein is Dual-specificity RNA methyltransferase RlmN of Francisella tularensis subsp. tularensis (strain FSC 198).